A 307-amino-acid polypeptide reads, in one-letter code: Ornithine carbamoyltransferase (307 aa).

Residues 53 to 56 (STRT), Gln80, Arg104, and 131 to 134 (HPCQ) each bind carbamoyl phosphate. L-ornithine contacts are provided by residues Asn162, Asp220, and 224–225 (SM). Residues 260–261 (CL) and Arg288 each bind carbamoyl phosphate.

This sequence belongs to the aspartate/ornithine carbamoyltransferase superfamily. OTCase family.

It is found in the cytoplasm. The catalysed reaction is carbamoyl phosphate + L-ornithine = L-citrulline + phosphate + H(+). The protein operates within amino-acid biosynthesis; L-arginine biosynthesis; L-arginine from L-ornithine and carbamoyl phosphate: step 1/3. Functionally, reversibly catalyzes the transfer of the carbamoyl group from carbamoyl phosphate (CP) to the N(epsilon) atom of ornithine (ORN) to produce L-citrulline. This chain is Ornithine carbamoyltransferase, found in Nitrosomonas eutropha (strain DSM 101675 / C91 / Nm57).